The chain runs to 1388 residues: Collagen alpha-1(XV) chain (1388 aa).

Residues 1 to 27 form the signal peptide; it reads MAPRRNNGQCWCLLMLLSVSTPLPAVT. The Laminin G-like domain occupies 66 to 249; that stretch reads AYSFGPGANV…SSASGETSGL (184 aa). The interval 223–250 is disordered; the sequence is TVHPDPRTPEELCDPEESSASGETSGLQ. The tract at residues 229–555 is nonhelical region 1 (NC1); sequence RTPEELCDPE…WITPAQREHV (327 aa). Positions 240-249 are enriched in polar residues; the sequence is SSASGETSGL. Ser243 and Ser247 each carry an O-linked (Xyl...) (chondroitin sulfate) serine glycan. Thr265 carries an O-linked (GalNAc...) threonine glycan. Residues 266–301 are disordered; the sequence is QASPKEAKVEPINTPPTPSSPFEDMELSGEPVPEGT. N-linked (GlcNAc...) asparagine glycosylation is found at Asn306 and Asn324. Residue Ser343 is glycosylated (O-linked (Xyl...) (chondroitin sulfate) serine). Tandem repeats lie at residues 358–408, 409–459, 460–509, and 510–555. The segment at 358 to 555 is 4 X tandem repeats; that stretch reads AATAAGLAEV…WITPAQREHV (198 aa). A disordered region spans residues 371–795; sequence TAGEAEASSV…VGPPGPRGPP (425 aa). The segment covering 379-392 has biased composition (polar residues); that stretch reads SVPTGGPTLSMSTE. A compositionally biased stretch (low complexity) spans 409 to 420; that stretch reads AATAAGEAEALA. Residues 452 to 472 are compositionally biased toward polar residues; it reads GPSSEDSLTTAAAATEVSLST. Residues 510 to 527 show a composition bias toward low complexity; that stretch reads AAATTEEPLITAGGEESG. Positions 528 to 540 are enriched in pro residues; the sequence is SPPPDGPPLPLPT. Positions 556–573 are triple-helical region 1 (COL1); it reads GMKGQAGPKGEKGDAGEE. The interval 574–618 is nonhelical region 2 (NC2); it reads LPGPPEPSGPVGPTAGAEAEGSGLGWGSDVGSGSGDLVGSEQLLR. Over residues 595-609 the composition is skewed to gly residues; sequence SGLGWGSDVGSGSGD. Collagen-like domains lie at 619–680 and 681–731; these read GPPG…MKGE and KGAR…PPGP. Residues 619–732 form a triple-helical region 2 (COL2) region; sequence GPPGPPGPPG…PGPPGPPGPG (114 aa). Over residues 620–630 the composition is skewed to pro residues; sequence PPGPPGPPGLP. Asn687 carries N-linked (GlcNAc...) asparagine glycosylation. Residues 716-731 show a composition bias toward pro residues; that stretch reads VMGPPGPPGPPGPPGP. Residues 733–763 are nonhelical region 3 (NC3); that stretch reads CTMGLGFEDTEGSGSTQLLNEPKLSRPTAAI. Ser745 is a glycosylation site (O-linked (Xyl...) (chondroitin sulfate) serine). The segment at 764–798 is triple-helical region 3 (COL3); it reads GLKGEKGDRGPKGERGMDGASIVGPPGPRGPPGHI. Over residues 766–780 the composition is skewed to basic and acidic residues; that stretch reads KGEKGDRGPKGERGM. Positions 799-822 are nonhelical region 4 (NC4); the sequence is KVLSNSLINITHGFMNFSDIPELV. N-linked (GlcNAc...) asparagine glycans are attached at residues Asn807 and Asn814. Residues 823 to 865 enclose the Collagen-like 3 domain; sequence GPPGPDGLPGLPGFPGPRGPKGDTGLPGFPGLKGEQGEKGEPG. Residues 823 to 867 are triple-helical region 4 (COL4); the sequence is GPPGPDGLPGLPGFPGPRGPKGDTGLPGFPGLKGEQGEKGEPGAI. Pro residues predominate over residues 827 to 840; that stretch reads PDGLPGLPGFPGPR. The disordered stretch occupies residues 827-864; the sequence is PDGLPGLPGFPGPRGPKGDTGLPGFPGLKGEQGEKGEP. Positions 868 to 878 are nonhelical region 5 (NC5); sequence LTEDIPLERLM. Residues 879–927 enclose the Collagen-like 4 domain; it reads GKKGEPGMHGAPGPMGPKGPPGHKGEFGLPGRPGRPGLNGLKGTKGDPG. A triple-helical region 5 (COL5) region spans residues 879–949; that stretch reads GKKGEPGMHG…PGPPGPPGAV (71 aa). The segment at 950–983 is nonhelical region 6 (NC6); it reads INIKGAIFPIPVRPHCKMPVDTAHPGSPELITFH. Residues 984–1013 are triple-helical region 6 (COL6); the sequence is GVKGEKGSWGLPGSKGEKGDQGAQGPPGPP. 2 disordered regions span residues 988 to 1016 and 1029 to 1133; these read EKGS…PLDL and ENGD…GSRN. The segment at 1014 to 1027 is nonhelical region 7 (NC7); it reads LDLAYLRHFLNNLK. The interval 1028-1045 is triple-helical region 7 (COL7); sequence GENGDKGFKGEKGEKGDI. Positions 1029–1044 are enriched in basic and acidic residues; the sequence is ENGDKGFKGEKGEKGD. An N-linked (GlcNAc...) asparagine glycan is attached at Asn1046. The segment at 1046-1052 is nonhelical region 8 (NC8); it reads NGSFLMS. Positions 1053-1107 are triple-helical region 8 (COL8); the sequence is GPPGLPGNPGPAGQKGETVVGPQGPPGAPGLPGPPGFGRPGDPGPPGPPGPPGPP. Composition is skewed to pro residues over residues 1075–1107 and 1117–1126; these read QGPP…PGPP and PGPPGPPGQP. The nonhelical region 9 (NC9) stretch occupies residues 1108–1117; that stretch reads AILGAAVALP. The triple-helical region 9 (COL9) stretch occupies residues 1118–1132; it reads GPPGPPGQPGLPGSR. Residues 1133 to 1388 form a nonhelical region 10 (NC10) region; sequence NLVTAFSNMD…ENSFMTDARK (256 aa). 2 disulfide bridges follow: Cys1237-Cys1377 and Cys1339-Cys1369.

The protein belongs to the multiplexin collagen family. Trimer; disulfide-linked. As to quaternary structure, interacts moderately with EFEMP2. Prolines at the third position of the tripeptide repeating unit (G-X-Y) are hydroxylated in some or all of the chains. In terms of processing, O-glycosylated; with core 1 or possibly core 8 glycans. Contains chondroitin sulfate. Detected in fibroblasts and urine (at protein level). Detected in placenta (at protein level). Expressed predominantly in internal organs such as adrenal gland, pancreas and kidney.

The protein resides in the secreted. It localises to the extracellular space. It is found in the extracellular matrix. Structural protein that stabilizes microvessels and muscle cells, both in heart and in skeletal muscle. In terms of biological role, restin potently inhibits angiogenesis. This chain is Collagen alpha-1(XV) chain (COL15A1), found in Homo sapiens (Human).